The following is a 145-amino-acid chain: Transcription antitermination protein NusB (145 aa).

Belongs to the NusB family.

Involved in transcription antitermination. Required for transcription of ribosomal RNA (rRNA) genes. Binds specifically to the boxA antiterminator sequence of the ribosomal RNA (rrn) operons. The chain is Transcription antitermination protein NusB from Burkholderia vietnamiensis (strain G4 / LMG 22486) (Burkholderia cepacia (strain R1808)).